The chain runs to 123 residues: uncharacterized protein (123 aa).

2 disordered regions span residues 1–33 (MAPPGGKINRPRTELKKKLFKRRRVLSRDRRRK) and 82–123 (EKAA…EDKS). Basic residues predominate over residues 18-33 (KLFKRRRVLSRDRRRK).

This is an uncharacterized protein from Mus musculus (Mouse).